A 145-amino-acid polypeptide reads, in one-letter code: Superoxide dismutase [Mn/Fe] (145 aa).

Residues histidine 10 and histidine 64 each contribute to the Fe(3+) site. Mn(2+) is bound by residues histidine 10 and histidine 64.

This sequence belongs to the iron/manganese superoxide dismutase family. Mn(2+) serves as cofactor. The cofactor is Fe(3+).

The catalysed reaction is 2 superoxide + 2 H(+) = H2O2 + O2. In terms of biological role, destroys superoxide anion radicals which are normally produced within the cells and which are toxic to biological systems. Catalyzes the dismutation of superoxide anion radicals into O2 and H2O2 by successive reduction and oxidation of the transition metal ion at the active site. The sequence is that of Superoxide dismutase [Mn/Fe] (sodA) from Streptococcus porcinus.